A 265-amino-acid chain; its full sequence is Orphan methyltransferase M.BamHII (265 aa).

It belongs to the N(4)/N(6)-methyltransferase family. N(4) subfamily.

It catalyses the reaction a 2'-deoxycytidine in DNA + S-adenosyl-L-methionine = an N(4)-methyl-2'-deoxycytidine in DNA + S-adenosyl-L-homocysteine + H(+). In terms of biological role, a beta subtype methylase, recognizes the double-stranded sequence 5'-GGATCC-3', methylates C-? on both strands. No endonuclease has been identified for this methylase, although it is speculated it might protect against BamHI. The chain is Orphan methyltransferase M.BamHII (bamHIIM) from Bacillus amyloliquefaciens (Bacillus velezensis).